The sequence spans 152 residues: UPF0225 protein YchJ (152 aa).

It belongs to the UPF0225 family.

This is UPF0225 protein YchJ from Shigella flexneri serotype 5b (strain 8401).